The primary structure comprises 223 residues: FAD-dependent monooxygenase imqC (223 aa).

FAD contacts are provided by residues 139-141 (RFY), tyrosine 189, and aspartate 210.

Belongs to the PheA/TfdB FAD monooxygenase family.

It participates in secondary metabolite biosynthesis. In terms of biological role, FAD-dependent monooxygenase; part of the gene cluster that mediates the biosynthesis of imizoquins A to D, tripeptide-derived alkaloids that serve a protective role against oxidative stress that are essential for normal germination. ImqB is a canonical three-module NRPS that assembles the tripeptide backbone of the imizoquins via condensation of Trp, Tyr, and Leu-derived precursors. N-methylation by imqF and phenol oxidation by imqC, followed by cyclization via the FAD-dependent oxidase imqH carry out the three-step transformation of L-tyrosine into tetrahydroisoquinoline. Importantly, this sequence requires the presence of a free amine in the tyrosine moiety, indicating that isoquinoline formation occurs prior to peptide bond formation. The imidazolidin-4-one ring of imizoquins could form following additional oxidation of the methyl-derived bridgehead carbon by imqH. Lastly, O-methylation by imqG and leucine hydroxylation by imqE complete biosynthesis of the imizoquins. The polypeptide is FAD-dependent monooxygenase imqC (Aspergillus flavus (strain ATCC 200026 / FGSC A1120 / IAM 13836 / NRRL 3357 / JCM 12722 / SRRC 167)).